The following is a 750-amino-acid chain: Serine/threonine-protein kinase PknG (750 aa).

The segment at 1–66 (MAKASETERS…PQDRMATTSR (66 aa)) is disordered. A compositionally biased stretch (polar residues) spans 17–34 (ADAQTATSATVRPLSTQA). The Protein kinase domain occupies 151–396 (YEVKGCIAHG…EMSAQLTGVL (246 aa)). ATP is bound by residues 157-165 (IAHGGLGWI) and Lys181. Catalysis depends on Asp276, which acts as the Proton acceptor.

This sequence belongs to the protein kinase superfamily. Ser/Thr protein kinase family. In terms of processing, autophosphorylated.

It carries out the reaction L-seryl-[protein] + ATP = O-phospho-L-seryl-[protein] + ADP + H(+). The enzyme catalyses L-threonyl-[protein] + ATP = O-phospho-L-threonyl-[protein] + ADP + H(+). In Mycobacterium bovis (strain ATCC BAA-935 / AF2122/97), this protein is Serine/threonine-protein kinase PknG (pknG).